Reading from the N-terminus, the 33-residue chain is Trypsin inhibitor 1 (33 aa).

Intrachain disulfides connect Cys-1/Cys-17, Cys-8/Cys-21, and Cys-16/Cys-32.

In terms of tissue distribution, expressed in leaves and fruit flesh (at protein level).

In terms of biological role, inhibits trypsin (IC(50)=471 nM). The protein is Trypsin inhibitor 1 of Beta vulgaris subsp. vulgaris (Beet).